Consider the following 171-residue polypeptide: Large ribosomal subunit protein bL9 (171 aa).

The protein belongs to the bacterial ribosomal protein bL9 family.

In terms of biological role, binds to the 23S rRNA. In Rickettsia canadensis (strain McKiel), this protein is Large ribosomal subunit protein bL9.